Reading from the N-terminus, the 312-residue chain is Acetyl-coenzyme A carboxylase carboxyl transferase subunit alpha (312 aa).

A CoA carboxyltransferase C-terminal domain is found at 36–286; sequence NLEKEISKTY…ADYVKKSLNE (251 aa).

Belongs to the AccA family. As to quaternary structure, acetyl-CoA carboxylase is a heterohexamer composed of biotin carboxyl carrier protein (AccB), biotin carboxylase (AccC) and two subunits each of ACCase subunit alpha (AccA) and ACCase subunit beta (AccD).

Its subcellular location is the cytoplasm. The enzyme catalyses N(6)-carboxybiotinyl-L-lysyl-[protein] + acetyl-CoA = N(6)-biotinyl-L-lysyl-[protein] + malonyl-CoA. The protein operates within lipid metabolism; malonyl-CoA biosynthesis; malonyl-CoA from acetyl-CoA: step 1/1. In terms of biological role, component of the acetyl coenzyme A carboxylase (ACC) complex. First, biotin carboxylase catalyzes the carboxylation of biotin on its carrier protein (BCCP) and then the CO(2) group is transferred by the carboxyltransferase to acetyl-CoA to form malonyl-CoA. The sequence is that of Acetyl-coenzyme A carboxylase carboxyl transferase subunit alpha from Campylobacter jejuni subsp. jejuni serotype O:23/36 (strain 81-176).